The sequence spans 310 residues: Nitric oxide synthase-interacting protein homolog (310 aa).

Residues 115-124 (FSAIESTPSR) show a composition bias toward polar residues. Residues 115 to 141 (FSAIESTPSRTGAVATPRPEVGSLKRQ) are disordered.

It belongs to the NOSIP family.

The protein localises to the cytoplasm. The protein resides in the nucleus. Its function is as follows. Negatively regulates nitric oxide production by inducing nitric oxide synthase translocation to actin cytoskeleton and inhibiting its enzymatic activity. This is Nitric oxide synthase-interacting protein homolog from Caenorhabditis elegans.